Consider the following 398-residue polypeptide: Enoyl-[acyl-carrier-protein] reductase [NADH] (398 aa).

Residues 48–53 (GSSTGY), 74–75 (FE), 111–112 (DA), and 139–140 (LA) contribute to the NAD(+) site. A substrate-binding site is contributed by Y225. Residue Y235 is the Proton donor of the active site. Residues K244 and 273-275 (VVT) contribute to the NAD(+) site.

It belongs to the TER reductase family. Monomer.

It carries out the reaction a 2,3-saturated acyl-[ACP] + NAD(+) = a (2E)-enoyl-[ACP] + NADH + H(+). Its pathway is lipid metabolism; fatty acid biosynthesis. Its function is as follows. Involved in the final reduction of the elongation cycle of fatty acid synthesis (FAS II). Catalyzes the reduction of a carbon-carbon double bond in an enoyl moiety that is covalently linked to an acyl carrier protein (ACP). This is Enoyl-[acyl-carrier-protein] reductase [NADH] from Pseudomonas aeruginosa (strain UCBPP-PA14).